Here is a 188-residue protein sequence, read N- to C-terminus: Chitin synthase 1 (188 aa).

It belongs to the chitin synthase family. Class I subfamily.

The protein localises to the cell membrane. The catalysed reaction is [(1-&gt;4)-N-acetyl-beta-D-glucosaminyl](n) + UDP-N-acetyl-alpha-D-glucosamine = [(1-&gt;4)-N-acetyl-beta-D-glucosaminyl](n+1) + UDP + H(+). In terms of biological role, polymerizes chitin, a structural polymer of the cell wall and septum, by transferring the sugar moiety of UDP-GlcNAc to the non-reducing end of the growing chitin polymer. This Ajellomyces dermatitidis (Blastomyces dermatitidis) protein is Chitin synthase 1 (CHS1).